The sequence spans 271 residues: Probable redox regulatory protein SCO3349 (271 aa).

Disordered stretches follow at residues 1-21 and 109-130; these read MPKT…KHIA and AEGT…TRPF. A compositionally biased stretch (basic and acidic residues) spans 7–21; the sequence is AKDEKSAKKDKKHIA.

The protein belongs to the Rv0495c family.

In terms of biological role, essential for maintaining intracellular redox homeostasis. The sequence is that of Probable redox regulatory protein SCO3349 from Streptomyces coelicolor (strain ATCC BAA-471 / A3(2) / M145).